A 216-amino-acid polypeptide reads, in one-letter code: Protein-L-isoaspartate O-methyltransferase (216 aa).

Ser-61 is an active-site residue.

Belongs to the methyltransferase superfamily. L-isoaspartyl/D-aspartyl protein methyltransferase family.

The protein localises to the cytoplasm. The enzyme catalyses [protein]-L-isoaspartate + S-adenosyl-L-methionine = [protein]-L-isoaspartate alpha-methyl ester + S-adenosyl-L-homocysteine. Functionally, catalyzes the methyl esterification of L-isoaspartyl residues in peptides and proteins that result from spontaneous decomposition of normal L-aspartyl and L-asparaginyl residues. It plays a role in the repair and/or degradation of damaged proteins. In Geobacter metallireducens (strain ATCC 53774 / DSM 7210 / GS-15), this protein is Protein-L-isoaspartate O-methyltransferase.